Here is a 129-residue protein sequence, read N- to C-terminus: Glycine cleavage system H protein (129 aa).

Residues 24–106 (TYTVGITEHA…YAGGWIFKIK (83 aa)) enclose the Lipoyl-binding domain. Lysine 65 bears the N6-lipoyllysine mark.

It belongs to the GcvH family. The glycine cleavage system is composed of four proteins: P, T, L and H. The cofactor is (R)-lipoate.

Its function is as follows. The glycine cleavage system catalyzes the degradation of glycine. The H protein shuttles the methylamine group of glycine from the P protein to the T protein. In Escherichia coli O139:H28 (strain E24377A / ETEC), this protein is Glycine cleavage system H protein.